Consider the following 347-residue polypeptide: NADH-ubiquinone oxidoreductase chain 2 (347 aa).

The next 11 helical transmembrane spans lie at 2 to 22 (SPYVLTIMSLSLLLGTTMTLI), 25 to 45 (HWLTAWMGLEINTLAVIPLMT), 56 to 76 (AIKYFMIQATASMIILFSAIF), 96 to 116 (FMMTIALAMKLGLAPFHFWVP), 122 to 142 (IPLLSGMILLTWQKIAPISIF), 149 to 169 (LNMSLLMILSITSTLLGGWGG), 178 to 197 (ILAYSSIAHMGWMTIIIMIY), 202 to 219 (ILNLILYLASTITMFMVL), 241 to 261 (MIIITLTLLSLGGLPPLTGFM), 278 to 298 (LAMMLALSTLLNLFFYMRIIY), and 323 to 343 (ILPIPTLTIISSLLLPMTPMF).

This sequence belongs to the complex I subunit 2 family. As to quaternary structure, core subunit of respiratory chain NADH dehydrogenase (Complex I) which is composed of 45 different subunits. Interacts with TMEM242.

It is found in the mitochondrion inner membrane. It carries out the reaction a ubiquinone + NADH + 5 H(+)(in) = a ubiquinol + NAD(+) + 4 H(+)(out). Core subunit of the mitochondrial membrane respiratory chain NADH dehydrogenase (Complex I) which catalyzes electron transfer from NADH through the respiratory chain, using ubiquinone as an electron acceptor. Essential for the catalytic activity and assembly of complex I. This is NADH-ubiquinone oxidoreductase chain 2 from Metachirus nudicaudatus (Brown four-eyed opossum).